An 826-amino-acid chain; its full sequence is Periplasmic nitrate reductase (826 aa).

A signal peptide (tat-type signal) is located at residues 1-32; it reads MSISRREFLKANAAVAAATAVGATLPVKIVEA. Residues 39–95 form the 4Fe-4S Mo/W bis-MGD-type domain; sequence IKWDKAPCRFCGVGCSVLVGTDNGKVVATKGDPESPVNKGLNCIKGYFLSKIMYGKD. The [4Fe-4S] cluster site is built by Cys-46, Cys-49, Cys-53, and Cys-81. Mo-bis(molybdopterin guanine dinucleotide) contacts are provided by residues Lys-83, Gln-150, Asn-175, Cys-179, 212 to 219, 262 to 264, Met-372, Gln-376, Asn-482, 508 to 509, Lys-531, Asp-558, and 716 to 725; these read WGANMAEM, QSD, SD, and TGRVLEHWHT. Phe-792 contributes to the substrate binding site. Positions 800 and 817 each coordinate Mo-bis(molybdopterin guanine dinucleotide).

Belongs to the prokaryotic molybdopterin-containing oxidoreductase family. NasA/NapA/NarB subfamily. In terms of assembly, component of the periplasmic nitrate reductase NapAB complex composed of NapA and NapB. Requires [4Fe-4S] cluster as cofactor. It depends on Mo-bis(molybdopterin guanine dinucleotide) as a cofactor. Post-translationally, predicted to be exported by the Tat system. The position of the signal peptide cleavage has not been experimentally proven.

Its subcellular location is the periplasm. It catalyses the reaction 2 Fe(II)-[cytochrome] + nitrate + 2 H(+) = 2 Fe(III)-[cytochrome] + nitrite + H2O. Its function is as follows. Catalytic subunit of the periplasmic nitrate reductase complex NapAB. Receives electrons from NapB and catalyzes the reduction of nitrate to nitrite. In Shewanella halifaxensis (strain HAW-EB4), this protein is Periplasmic nitrate reductase.